A 451-amino-acid chain; its full sequence is 3-carboxy-cis,cis-muconate cycloisomerase (451 aa).

The protein belongs to the class-II fumarase/aspartase family.

It carries out the reaction 2-(carboxymethyl)-5-oxo-2,5-dihydro-2-furoate = 3-carboxy-cis,cis-muconate + H(+). Catalyzes an anti cycloisomerization. This is 3-carboxy-cis,cis-muconate cycloisomerase (pcaB) from Bradyrhizobium diazoefficiens (strain JCM 10833 / BCRC 13528 / IAM 13628 / NBRC 14792 / USDA 110).